The following is a 754-amino-acid chain: 1,4-alpha-glucan branching enzyme GlgB (754 aa).

Aspartate 431 (nucleophile) is an active-site residue. The Proton donor role is filled by glutamate 484.

The protein belongs to the glycosyl hydrolase 13 family. GlgB subfamily. In terms of assembly, monomer.

It carries out the reaction Transfers a segment of a (1-&gt;4)-alpha-D-glucan chain to a primary hydroxy group in a similar glucan chain.. It participates in glycan biosynthesis; glycogen biosynthesis. Functionally, catalyzes the formation of the alpha-1,6-glucosidic linkages in glycogen by scission of a 1,4-alpha-linked oligosaccharide from growing alpha-1,4-glucan chains and the subsequent attachment of the oligosaccharide to the alpha-1,6 position. This Prochlorococcus marinus (strain AS9601) protein is 1,4-alpha-glucan branching enzyme GlgB.